The chain runs to 246 residues: tRNA (guanine-N(7)-)-methyltransferase (246 aa).

Residues 1–23 are disordered; sequence MIESSSPTPPALHEGAPADVSHP. Glu-75, Glu-100, Asp-127, and Asp-150 together coordinate S-adenosyl-L-methionine. The active site involves Asp-150. Lys-154 is a binding site for substrate. The segment at 156 to 161 is interaction with RNA; it reads KHNKRR. Substrate contacts are provided by residues Asp-186 and 225-228; that span reads TKFE.

Belongs to the class I-like SAM-binding methyltransferase superfamily. TrmB family.

The catalysed reaction is guanosine(46) in tRNA + S-adenosyl-L-methionine = N(7)-methylguanosine(46) in tRNA + S-adenosyl-L-homocysteine. Its pathway is tRNA modification; N(7)-methylguanine-tRNA biosynthesis. In terms of biological role, catalyzes the formation of N(7)-methylguanine at position 46 (m7G46) in tRNA. This Polaromonas naphthalenivorans (strain CJ2) protein is tRNA (guanine-N(7)-)-methyltransferase.